Consider the following 546-residue polypeptide: Chaperonin GroEL 1 (546 aa).

ATP-binding positions include 30-33 (TLGP), lysine 51, 87-91 (DGTTT), glycine 415, and aspartate 495. A disordered region spans residues 527 to 546 (DAAPTAAPGGPGAGGPGFDF). The segment covering 535-546 (GGPGAGGPGFDF) has biased composition (gly residues).

It belongs to the chaperonin (HSP60) family. As to quaternary structure, forms a cylinder of 14 subunits composed of two heptameric rings stacked back-to-back. Interacts with the co-chaperonin GroES.

It localises to the cytoplasm. The catalysed reaction is ATP + H2O + a folded polypeptide = ADP + phosphate + an unfolded polypeptide.. Its function is as follows. Together with its co-chaperonin GroES, plays an essential role in assisting protein folding. The GroEL-GroES system forms a nano-cage that allows encapsulation of the non-native substrate proteins and provides a physical environment optimized to promote and accelerate protein folding. This is Chaperonin GroEL 1 from Burkholderia lata (strain ATCC 17760 / DSM 23089 / LMG 22485 / NCIMB 9086 / R18194 / 383).